The following is a 156-amino-acid chain: Transmembrane inner ear expressed protein (156 aa).

Positions 1-27 are cleaved as a signal peptide; the sequence is MAGWPGAGPLCVLGGAALGVCLAGVAG. Residues 28–57 are Extracellular-facing; the sequence is QLVEPSTAPPKPKPPPLTKETVVFWDMRLW. The helical transmembrane segment at 58–78 threads the bilayer; that stretch reads HVVGIFSLFVLSIIITLCCVF. Residues 79 to 156 lie on the Cytoplasmic side of the membrane; it reads NCRVPRTRKE…NEAKKKKGEK (78 aa). The interval 113 to 135 is disordered; the sequence is NELTEVPGEDKKKKKKKKKDSVD.

Forms the MET channel composed of TMC (TMC1 or TMC2), TMIE, TOMT, CIB (CIB2 or CIB3), LHPL5 and PCDH15. In terms of tissue distribution, expressed in many tissues.

Its subcellular location is the membrane. Auxiliary subunit of the mechanotransducer (MET) non-specific cation channel complex located at the tips of stereocilia of cochlear hair cells and that mediates sensory transduction in the auditory system. The MET complex is composed of two dimeric pore-forming ion-conducting transmembrane TMC (TMC1 or TMC2) subunits, and aided by several auxiliary proteins including LHFPL5, TMIE, CIB2/3 and TOMT, and the tip-link PCDH15. May contribute to the formation of the pore. The sequence is that of Transmembrane inner ear expressed protein (TMIE) from Homo sapiens (Human).